The sequence spans 124 residues: Darcynin homolog (124 aa).

It belongs to the darcynin family.

The chain is Darcynin homolog from Granulibacter bethesdensis (strain ATCC BAA-1260 / CGDNIH1).